The chain runs to 235 residues: V-type proton ATPase subunit E2 (235 aa).

Residue Met-1 is modified to N-acetylmethionine. A coiled-coil region spans residues 8-64 (KQIQQMVRFIRQEAEEKANEISISAEEEFNIERLQLLESAKRKLRQDYDRKLKQVDI).

This sequence belongs to the V-ATPase E subunit family. As to quaternary structure, V-ATPase is a heteromultimeric enzyme composed of a peripheral catalytic V1 complex (components A to H) attached to an integral membrane V0 proton pore complex (components: a, c, c'', d and e).

It is found in the vacuole membrane. Functionally, subunit of the peripheral V1 complex of vacuolar ATPase essential for assembly or catalytic function. V-ATPase is responsible for acidifying a variety of intracellular compartments in eukaryotic cells. This is V-type proton ATPase subunit E2 (VHA-E2) from Arabidopsis thaliana (Mouse-ear cress).